The primary structure comprises 1423 residues: Guanine nucleotide exchange factor subunit RIC1 (1423 aa).

2 WD repeats span residues 64–103 and 304–343; these read TQFGSYKQAEWRPDSTMIAVSTANGYILFFHITSTRGDKY and NKTGAVKLMRWSPDNSVVIVTWEYGGLSLWSVFGAQLICT. Polar residues predominate over residues 437 to 448; the sequence is ASQTQNPRSSST. Residues 437–463 form a disordered region; that stretch reads ASQTQNPRSSSTHSEHKPSREKSPFAD. The span at 449 to 460 shows a compositional bias: basic and acidic residues; that stretch reads HSEHKPSREKSP. Thr992 and Thr996 each carry phosphothreonine. Ser1015, Ser1017, Ser1019, Ser1037, and Ser1172 each carry phosphoserine. Residues 1355–1423 are disordered; sequence PDAFQPITMG…QDGTYDCSVS (69 aa). Positions 1379-1397 are enriched in polar residues; that stretch reads GSSSHGSIPQGEVGSSNMV. The span at 1404 to 1413 shows a compositional bias: acidic residues; sequence TAQAEEEEPF.

It belongs to the RIC1 family. Forms a complex with RGP1; the interaction enhances RAB6A GTPase activity. Interacts (via central domain) with RGP1. Interacts with RAB6A; the interaction is direct with a preference for RAB6A-GDP. Interacts (via C-terminus domain) with RAB33B; the interaction is direct with a preference for RAB33B-GTP. Interacts with GJA1. In terms of tissue distribution, present in kidney and various cell lines (at protein level). Widely expressed at low level.

It localises to the cytoplasm. It is found in the cytosol. The protein resides in the membrane. In terms of biological role, the RIC1-RGP1 complex acts as a guanine nucleotide exchange factor (GEF), which activates RAB6A by exchanging bound GDP for free GTP, and may thereby be required for efficient fusion of endosome-derived vesicles with the Golgi compartment. The RIC1-RGP1 complex participates in the recycling of mannose-6-phosphate receptors. Required for phosphorylation and localization of GJA1. Is a regulator of procollagen transport and secretion, and is required for correct cartilage morphogenesis and development of the craniofacial skeleton. The sequence is that of Guanine nucleotide exchange factor subunit RIC1 from Homo sapiens (Human).